The following is a 192-amino-acid chain: Neurogenic differentiation factor 1 (192 aa).

The bHLH domain occupies 19 to 71; sequence VRRVKANGRERARMHGLNNALDMLREYIPITTQHQKLSKIETLRLARNYIDAL. Positions 116–192 are disordered; the sequence is PSQFDIFSDP…SHQNTFNYSP (77 aa). Low complexity predominate over residues 139–163; the sequence is SSFSSSSPSSSCSPPQYYYSPTQPS.

In terms of tissue distribution, expressed in neuroblasts of the AB lineage. More specifically in precursors of the embryonic ventral cord motor neurons. Expressed to a lesser degree in the EMS lineage which generates mostly endoderm and mesoderm tissues.

It is found in the nucleus. Acts as a transcriptional regulator whose activity is required for several aspects of motor neuron fate specification, including cell division patterns, proper spatiotemporal expression of fate-specific markers, and normal axonal morphology and pathfinding. Involved in regulating glial specification. This is Neurogenic differentiation factor 1 (cnd-1) from Caenorhabditis elegans.